The following is a 429-amino-acid chain: 4-hydroxy-3-methylbut-2-en-1-yl diphosphate synthase (flavodoxin) (429 aa).

[4Fe-4S] cluster contacts are provided by C317, C320, C363, and E370.

This sequence belongs to the IspG family. It depends on [4Fe-4S] cluster as a cofactor.

It carries out the reaction (2E)-4-hydroxy-3-methylbut-2-enyl diphosphate + oxidized [flavodoxin] + H2O + 2 H(+) = 2-C-methyl-D-erythritol 2,4-cyclic diphosphate + reduced [flavodoxin]. Its pathway is isoprenoid biosynthesis; isopentenyl diphosphate biosynthesis via DXP pathway; isopentenyl diphosphate from 1-deoxy-D-xylulose 5-phosphate: step 5/6. Converts 2C-methyl-D-erythritol 2,4-cyclodiphosphate (ME-2,4cPP) into 1-hydroxy-2-methyl-2-(E)-butenyl 4-diphosphate. In Deinococcus radiodurans (strain ATCC 13939 / DSM 20539 / JCM 16871 / CCUG 27074 / LMG 4051 / NBRC 15346 / NCIMB 9279 / VKM B-1422 / R1), this protein is 4-hydroxy-3-methylbut-2-en-1-yl diphosphate synthase (flavodoxin).